We begin with the raw amino-acid sequence, 411 residues long: Putative odorant receptor 59c (411 aa).

Topologically, residues 1–46 (MTKFFFKRLQTAPLDQEVSSLDASDYYYRIAFFLGWTPPKGALLRW) are cytoplasmic. A helical membrane pass occupies residues 47-67 (IYSLWTLTTMWLGIVYLPLGL). Residues 68-86 (SLTYVKHFDRFTPTEFLTS) are Extracellular-facing. A helical membrane pass occupies residues 87 to 107 (LQVDINCIGNVIKSCVTYSQM). The Cytoplasmic portion of the chain corresponds to 108 to 139 (WRFRRMNELISSLDKRCVTTTQRRIFHKMVAR). A helical membrane pass occupies residues 140 to 160 (VNLIVILFLSTYLGFCFLTLF). Residues 161 to 185 (TSVFAGKAPWQLYNPLVDWRKGHWQ) lie on the Extracellular side of the membrane. The helical transmembrane segment at 186–206 (LWIASILEYCVVSIGTMQELM) threads the bilayer. The Cytoplasmic portion of the chain corresponds to 207 to 271 (SDTYAIVFIS…QIIRPILSIT (65 aa)). Residues 272–292 (IFAQFMLVGIDLGLAAISILF) traverse the membrane as a helical segment. The Extracellular segment spans residues 293–296 (FPNT). The helical transmembrane segment at 297 to 317 (IWTIMANVSFIVAICTESFPC) threads the bilayer. Over 318–369 (CMLCEHLIEDSVHVSNALFHSNWITADRSYKSAVLYFLHRAQQPIQFTAGSI) the chain is Cytoplasmic. The chain crosses the membrane as a helical span at residues 370 to 390 (FPISVQSNIAVAKFAFTIITI). Topologically, residues 391 to 411 (VNQMNLGEKFFSDRSNGDINP) are extracellular.

The protein belongs to the insect chemoreceptor superfamily. Heteromeric odorant receptor channel (TC 1.A.69) family. Or2a subfamily. Interacts with Orco. Complexes exist early in the endomembrane system in olfactory sensory neurons (OSNs), coupling these complexes to the conserved ciliary trafficking pathway. As to expression, expressed in olfactory sensory neurons in the maxillary palp.

The protein resides in the cell membrane. In terms of biological role, odorant receptor which mediates acceptance or avoidance behavior, depending on its substrates. The odorant receptor repertoire encodes a large collection of odor stimuli that vary widely in identity, intensity, and duration. May form a complex with Orco to form odorant-sensing units, providing sensitive and prolonged odorant signaling and calcium permeability. In Drosophila melanogaster (Fruit fly), this protein is Putative odorant receptor 59c (Or59c).